A 311-amino-acid polypeptide reads, in one-letter code: MASRAQRTGGRMILHNDLSGLRVVAVHAHPDDEAITTGGALHHLATRGADVTVVTCTLGEQGEVIGETWQQLVNGDADQLGGFRIHELLSSLRILGASGCFLGGAGRWRDSGMVGDPANDHPRSFVRSGDQAEEQLVEIFTMLRPHLVITYGPDGGYGHPDHIRAHEITHGAAGRVEGIQRILWAVTGRTDLQAGLDAISAVPTGWRAAGDDELACQDRVDFALELDDRAYHAKVESMRAHATQLWIADGGVSDTNPHAAFAEVTDRAAAPVVFALSNLIAQPVMRREHYQLGAGTAFPADAQGPADGLQW.

The Zn(2+) site is built by His29, Asp32, and His162.

This sequence belongs to the MshB deacetylase family. Requires Zn(2+) as cofactor.

It carries out the reaction 1D-myo-inositol 2-acetamido-2-deoxy-alpha-D-glucopyranoside + H2O = 1D-myo-inositol 2-amino-2-deoxy-alpha-D-glucopyranoside + acetate. Functionally, catalyzes the deacetylation of 1D-myo-inositol 2-acetamido-2-deoxy-alpha-D-glucopyranoside (GlcNAc-Ins) in the mycothiol biosynthesis pathway. In Corynebacterium efficiens (strain DSM 44549 / YS-314 / AJ 12310 / JCM 11189 / NBRC 100395), this protein is 1D-myo-inositol 2-acetamido-2-deoxy-alpha-D-glucopyranoside deacetylase.